The chain runs to 117 residues: Immunoglobulin heavy variable 7-4-1 (117 aa).

An N-terminal signal peptide occupies residues 1-19; it reads MDWTWRILFLVAAATGAHS. The segment at 20–44 is framework-1; it reads QVQLVQSGSELKKPGASVKVSCKAS. An Ig-like domain is found at 20-117; it reads QVQLVQSGSE…EDTAVYYCAR (98 aa). Cys-41 and Cys-115 are disulfide-bonded. A complementarity-determining-1 region spans residues 45 to 52; sequence GYTFTSYA. The framework-2 stretch occupies residues 53–69; it reads MNWVRQAPGQGLEWMGW. The tract at residues 70 to 77 is complementarity-determining-2; sequence INTNTGNP. Residues 78–115 form a framework-3 region; that stretch reads TYAQGFTGRFVFSLDTSVSTAYLQICSLKAEDTAVYYC. The interval 116-117 is complementarity-determining-3; the sequence is AR.

In terms of assembly, immunoglobulins are composed of two identical heavy chains and two identical light chains; disulfide-linked.

The protein localises to the secreted. The protein resides in the cell membrane. Its function is as follows. V region of the variable domain of immunoglobulin heavy chains that participates in the antigen recognition. Immunoglobulins, also known as antibodies, are membrane-bound or secreted glycoproteins produced by B lymphocytes. In the recognition phase of humoral immunity, the membrane-bound immunoglobulins serve as receptors which, upon binding of a specific antigen, trigger the clonal expansion and differentiation of B lymphocytes into immunoglobulins-secreting plasma cells. Secreted immunoglobulins mediate the effector phase of humoral immunity, which results in the elimination of bound antigens. The antigen binding site is formed by the variable domain of one heavy chain, together with that of its associated light chain. Thus, each immunoglobulin has two antigen binding sites with remarkable affinity for a particular antigen. The variable domains are assembled by a process called V-(D)-J rearrangement and can then be subjected to somatic hypermutations which, after exposure to antigen and selection, allow affinity maturation for a particular antigen. This is Immunoglobulin heavy variable 7-4-1 from Homo sapiens (Human).